The chain runs to 276 residues: NAD kinase (276 aa).

Residue Asp-61 is the Proton acceptor of the active site. Residues 61–62 (DG), 134–135 (ND), Arg-145, Lys-162, Asp-164, Val-172, 175–180 (TAYSFS), and Gln-234 contribute to the NAD(+) site.

It belongs to the NAD kinase family. Requires a divalent metal cation as cofactor.

The protein localises to the cytoplasm. It catalyses the reaction NAD(+) + ATP = ADP + NADP(+) + H(+). Involved in the regulation of the intracellular balance of NAD and NADP, and is a key enzyme in the biosynthesis of NADP. Catalyzes specifically the phosphorylation on 2'-hydroxyl of the adenosine moiety of NAD to yield NADP. This is NAD kinase from Clostridium perfringens (strain 13 / Type A).